The sequence spans 152 residues: Transcriptional regulator MraZ (152 aa).

2 SpoVT-AbrB domains span residues 5-52 (ASAI…PLDE) and 81-124 (AHEC…DEAA).

This sequence belongs to the MraZ family. As to quaternary structure, forms oligomers.

Its subcellular location is the cytoplasm. It is found in the nucleoid. The chain is Transcriptional regulator MraZ from Shewanella violacea (strain JCM 10179 / CIP 106290 / LMG 19151 / DSS12).